Consider the following 291-residue polypeptide: Verruculogen synthase (291 aa).

Belongs to the PhyH family. Homodimer. Fe cation serves as cofactor.

The catalysed reaction is fumitremorgin B + 2-oxoglutarate + AH2 + 2 O2 = verruculogen + succinate + A + CO2 + H2O. The protein operates within mycotoxin biosynthesis. In terms of biological role, verruculogen synthase; part of the gene cluster that mediates the biosynthesis of fumitremorgins, indole alkaloids that carry not only intriguing chemical structures, but also interesting biological and pharmacological activities. The biosynthesis of fumitremorgin-type alkaloids begins by condensation of the two amino acids L-tryptophan and L-proline to brevianamide F, catalyzed by the non-ribosomal peptide synthetase ftmPS/ftmA. Brevianamide F is then prenylated by the prenyltransferase ftmPT1/ftmB in the presence of dimethylallyl diphosphate, resulting in the formation of tryprostatin B. The three cytochrome P450 monooxygenases, ftmP450-1/ftmC, ftmP450-2/ftmE and ftmP450-3/FtmG, are responsible for the conversion of tryprostatin B to 6-hydroxytryprostatin B, tryprostatin A to fumitremorgin C and fumitremorgin C to 12,13-dihydroxyfumitremorgin C, respectively. The putative methyltransferase ftmMT/ftmD is expected for the conversion of 6-hydroxytryprostatin B to tryprostatin A. FtmPT2/FtmH catalyzes the prenylation of 12,13-dihydroxyfumitre-morgin C in the presence of dimethylallyl diphosphate, resulting in the formation of fumitremorgin B. Fumitremorgin B is further converted to verruculogen by ftmOx1/ftmF via the insertion of an endoperoxide bond between the two prenyl moieties. Finally, verruculogen is further converted to fumitremorgin A by the verruculogen prenyltransferase ftmPT3. This is Verruculogen synthase from Neosartorya fischeri (strain ATCC 1020 / DSM 3700 / CBS 544.65 / FGSC A1164 / JCM 1740 / NRRL 181 / WB 181) (Aspergillus fischerianus).